The following is a 639-amino-acid chain: Collagen alpha-1(XII) chain (639 aa).

The 114-residue stretch at 1–114 folds into the VWFA domain; it reads CRKSLLQAVA…DSLSKIVDDL (114 aa). 6 Fibronectin type-III domains span residues 130–219, 220–310, 311–401, 402–490, 491–585, and 586–639; these read APSN…LPVP, IVSL…LPLP, RPQD…VPAP, TNLR…SPKS, GPRN…TVRN, and LRVY…LRNL. Positions 473-496 are disordered; it reads DESESDDLTGSERTSPKSGPRNLQ.

This sequence belongs to the fibril-associated collagens with interrupted helices (FACIT) family. In terms of assembly, trimer of identical chains each containing 190 kDa of non-triple-helical sequences. The triple-helical tail is stabilized by disulfide bonds at each end. Post-translationally, prolines at the third position of the tripeptide repeating unit (G-X-Y) are hydroxylated in some or all of the chains. In terms of processing, O-glycosylated; glycosaminoglycan of chondroitin-sulfate type.

It is found in the secreted. The protein resides in the extracellular space. Its subcellular location is the extracellular matrix. Its function is as follows. Type XII collagen interacts with type I collagen-containing fibrils, the COL1 domain could be associated with the surface of the fibrils, and the COL2 and NC3 domains may be localized in the perifibrillar matrix. This Oryctolagus cuniculus (Rabbit) protein is Collagen alpha-1(XII) chain (COL12A1).